Here is a 225-residue protein sequence, read N- to C-terminus: MADS-box transcription factor 5 (225 aa).

One can recognise an MADS-box domain in the interval 1–61 (MGRGKVELKR…GRLFEFSTSS (61 aa)). The K-box domain occupies 89-179 (ELSNYQEYLK…KRKIQETSGE (91 aa)).

In terms of assembly, may interact with the K-box of MADS6.

It localises to the nucleus. Probable transcription factor. This Oryza sativa subsp. indica (Rice) protein is MADS-box transcription factor 5 (MADS5).